Here is a 238-residue protein sequence, read N- to C-terminus: Sugar fermentation stimulation protein homolog (238 aa).

The protein belongs to the SfsA family.

In Shewanella denitrificans (strain OS217 / ATCC BAA-1090 / DSM 15013), this protein is Sugar fermentation stimulation protein homolog.